Consider the following 547-residue polypeptide: Glucose-6-phosphate isomerase (547 aa).

E351 functions as the Proton donor in the catalytic mechanism. Catalysis depends on residues H382 and K509.

The protein belongs to the GPI family.

The protein localises to the cytoplasm. The catalysed reaction is alpha-D-glucose 6-phosphate = beta-D-fructose 6-phosphate. It functions in the pathway carbohydrate biosynthesis; gluconeogenesis. It participates in carbohydrate degradation; glycolysis; D-glyceraldehyde 3-phosphate and glycerone phosphate from D-glucose: step 2/4. In terms of biological role, catalyzes the reversible isomerization of glucose-6-phosphate to fructose-6-phosphate. This Coxiella burnetii (strain CbuK_Q154) (Coxiella burnetii (strain Q154)) protein is Glucose-6-phosphate isomerase.